The following is a 154-amino-acid chain: Protein X (154 aa).

A mitochondrial targeting sequence region spans residues proline 68–phenylalanine 117.

It belongs to the orthohepadnavirus protein X family. In terms of assembly, may form homodimer. May interact with host CEBPA, CFLAR, CREB1, DDB1, E4F1, HBXIP, HSPD1/HSP60, NFKBIA, POLR2E and SMAD4. Interacts with host SMC5-SMC6 complex and induces its degradation. Interacts with host TRPC4AP; leading to prevent ubiquitination of TRPC4AP. Interacts with host PLSCR1; this interaction promotes ubiquitination and degradation of HBx and impairs HBx-mediated cell proliferation. Post-translationally, a fraction may be phosphorylated in insect cells and HepG2 cells, a human hepatoblastoma cell line. Phosphorylated in vitro by host protein kinase C or mitogen-activated protein kinase. N-acetylated in insect cells.

Its subcellular location is the host cytoplasm. The protein localises to the host nucleus. It localises to the host mitochondrion. Its function is as follows. Multifunctional protein that plays a role in silencing host antiviral defenses and promoting viral transcription. Does not seem to be essential for HBV infection. May be directly involved in development of cirrhosis and liver cancer (hepatocellular carcinoma). Most of cytosolic activities involve modulation of cytosolic calcium. The effect on apoptosis is controversial depending on the cell types in which the studies have been conducted. May induce apoptosis by localizing in mitochondria and causing loss of mitochondrial membrane potential. May also modulate apoptosis by binding host CFLAR, a key regulator of the death-inducing signaling complex (DISC). Promotes viral transcription by using the host E3 ubiquitin ligase DDB1 to target the SMC5-SMC6 complex to proteasomal degradation. This host complex would otherwise bind to viral episomal DNA, and prevents its transcription. Moderately stimulates transcription of many different viral and cellular transcription elements. Promoters and enhancers stimulated by HBx contain DNA binding sites for NF-kappa-B, AP-1, AP-2, c-EBP, ATF/CREB, or the calcium-activated factor NF-AT. This chain is Protein X, found in Hepatitis B virus genotype E (isolate Chimpanzee/Ch195/1999) (HBV-E).